The chain runs to 462 residues: Fez family zinc finger protein 1 (462 aa).

Positions 34–49 (PLAFSIERIMSRTPEP) match the Engrailed homology 1 repressor motif. 6 consecutive C2H2-type zinc fingers follow at residues 260 to 282 (FTCEVCGKVFNAHYNLTRHMPVH), 288 to 310 (FVCKICGKGFRQASTLCRHKIIH), 316 to 338 (HKCNQCGKAFNRSSTLNTHTRIH), 344 to 366 (FVCEFCGKGFHQKGNYKNHKLTH), 372 to 394 (FKCNICNKAFHQIYNLTFHMHTH), and 400 to 423 (FTCPTCGKGFCRNFDLKKHVRKLH). The tract at residues 441 to 462 (LLLPNREPSPTIQSPQLQKSGY) is disordered. Positions 448–462 (PSPTIQSPQLQKSGY) are enriched in polar residues.

It belongs to the krueppel C2H2-type zinc-finger protein family.

It is found in the nucleus. Its function is as follows. Transcription repressor. Involved in the development of the forebrain region. This chain is Fez family zinc finger protein 1 (fezf1), found in Xenopus tropicalis (Western clawed frog).